The chain runs to 553 residues: Probable glucomannan 4-beta-mannosyltransferase 1 (553 aa).

A helical transmembrane segment spans residues 64–84 (LLPVFKGLVVMCLVLSIIVFF). The active site involves Asp163. Substrate contacts are provided by Asp222 and Asp224. The active site involves Asp316. Helical transmembrane passes span 395 to 415 (VAVHFLTFFFYCIIVPTSVFF), 431 to 451 (LISIFHTLATPRSFYLVIFWV), 510 to 530 (EVMVGVYILGCALYGLIYGHT), and 531 to 551 (WLHFYLFLQATAFFVSGFGFV).

It belongs to the glycosyltransferase 2 family. Plant cellulose synthase-like A subfamily.

It is found in the golgi apparatus membrane. It catalyses the reaction GDP-mannose + (glucomannan)n = GDP + (glucomannan)n+1.. Its function is as follows. Probable mannan synthase which consists of a 4-beta-mannosyltransferase activity on mannan using GDP-mannose. The beta-1,4-mannan product is the backbone for galactomannan synthesis by galactomannan galactosyltransferase. Galactomannan is a noncellulosic polysaccharides of plant cell wall. The sequence is that of Probable glucomannan 4-beta-mannosyltransferase 1 from Arabidopsis thaliana (Mouse-ear cress).